The sequence spans 172 residues: MNHFELFGLVEGFELDTRKLADTYRQLQTQFHPDRFATAPEREQLVAVQRAAQINDAYTTLKTPLRRAEYLLSLRGTDIRGEQQTLQDTSFLMQQLEWRERLADLKGEADPEGAIKDFRQEIGHDHQLLMQQLTLTLAAGDDLIAADCVRKLKFVDKLLEELERFEDSLFES.

Positions 2-74 constitute a J domain; it reads NHFELFGLVE…LRRAEYLLSL (73 aa).

The protein belongs to the HscB family. As to quaternary structure, interacts with HscA and stimulates its ATPase activity.

Co-chaperone involved in the maturation of iron-sulfur cluster-containing proteins. Seems to help targeting proteins to be folded toward HscA. The polypeptide is Co-chaperone protein HscB homolog (Aeromonas salmonicida (strain A449)).